The chain runs to 226 residues: ATP synthase F(0) complex subunit a (226 aa).

Helical transmembrane passes span 6-26 (FAPFITPTILGITTLPIIITF), 68-88 (WTLMLMSLILFIASTNLLGLL), 97-117 (QLSMNIGMAIPLWAGTVIMGF), 138-158 (IPMLIIIETISLFIQPLALAV), 164-184 (ITAGHLLIHLIGSATLALSSI), and 195-215 (ILFLLTLLEIAVAMIQAYVFT).

Belongs to the ATPase A chain family. In terms of assembly, component of the ATP synthase complex composed at least of ATP5F1A/subunit alpha, ATP5F1B/subunit beta, ATP5MC1/subunit c (homooctomer), MT-ATP6/subunit a, MT-ATP8/subunit 8, ATP5ME/subunit e, ATP5MF/subunit f, ATP5MG/subunit g, ATP5MK/subunit k, ATP5MJ/subunit j, ATP5F1C/subunit gamma, ATP5F1D/subunit delta, ATP5F1E/subunit epsilon, ATP5PF/subunit F6, ATP5PB/subunit b, ATP5PD/subunit d, ATP5PO/subunit OSCP. ATP synthase complex consists of a soluble F(1) head domain (subunits alpha(3) and beta(3)) - the catalytic core - and a membrane F(0) domain - the membrane proton channel (subunits c, a, 8, e, f, g, k and j). These two domains are linked by a central stalk (subunits gamma, delta, and epsilon) rotating inside the F1 region and a stationary peripheral stalk (subunits F6, b, d, and OSCP). Interacts with DNAJC30; interaction is direct.

It is found in the mitochondrion inner membrane. It catalyses the reaction H(+)(in) = H(+)(out). In terms of biological role, subunit a, of the mitochondrial membrane ATP synthase complex (F(1)F(0) ATP synthase or Complex V) that produces ATP from ADP in the presence of a proton gradient across the membrane which is generated by electron transport complexes of the respiratory chain. ATP synthase complex consist of a soluble F(1) head domain - the catalytic core - and a membrane F(1) domain - the membrane proton channel. These two domains are linked by a central stalk rotating inside the F(1) region and a stationary peripheral stalk. During catalysis, ATP synthesis in the catalytic domain of F(1) is coupled via a rotary mechanism of the central stalk subunits to proton translocation. With the subunit c (ATP5MC1), forms the proton-conducting channel in the F(0) domain, that contains two crucial half-channels (inlet and outlet) that facilitate proton movement from the mitochondrial intermembrane space (IMS) into the matrix. Protons are taken up via the inlet half-channel and released through the outlet half-channel, following a Grotthuss mechanism. The sequence is that of ATP synthase F(0) complex subunit a from Didelphis virginiana (North American opossum).